The chain runs to 259 residues: Adenylosuccinate synthetase (259 aa).

GTP-binding positions include 3 to 9 and 31 to 33; these read GDEGKGK and GHT. Asp4 (proton acceptor) is an active-site residue. Residues Asp4 and Gly31 each coordinate Mg(2+). 4 to 7 is an IMP binding site; that stretch reads DEGK. His32 acts as the Proton donor in catalysis. IMP contacts are provided by Thr120, Arg134, Gln215, and Thr230.

It belongs to the adenylosuccinate synthetase family. Homodimer. The cofactor is Mg(2+).

It is found in the cytoplasm. The enzyme catalyses IMP + L-aspartate + GTP = N(6)-(1,2-dicarboxyethyl)-AMP + GDP + phosphate + 2 H(+). The protein operates within purine metabolism; AMP biosynthesis via de novo pathway; AMP from IMP: step 1/2. Functionally, plays an important role in the de novo pathway of purine nucleotide biosynthesis. Catalyzes the first committed step in the biosynthesis of AMP from IMP. In Aggregatibacter actinomycetemcomitans (Actinobacillus actinomycetemcomitans), this protein is Adenylosuccinate synthetase.